Reading from the N-terminus, the 452-residue chain is Phosphoglucosamine mutase (452 aa).

Ser104 acts as the Phosphoserine intermediate in catalysis. Positions 104, 241, 243, and 245 each coordinate Mg(2+). Ser104 bears the Phosphoserine mark.

Belongs to the phosphohexose mutase family. It depends on Mg(2+) as a cofactor. Activated by phosphorylation.

The enzyme catalyses alpha-D-glucosamine 1-phosphate = D-glucosamine 6-phosphate. Its function is as follows. Catalyzes the conversion of glucosamine-6-phosphate to glucosamine-1-phosphate. This Arthrobacter sp. (strain FB24) protein is Phosphoglucosamine mutase.